Consider the following 152-residue polypeptide: Aspartate carbamoyltransferase regulatory chain (152 aa).

Cys108, Cys113, Cys137, and Cys140 together coordinate Zn(2+).

It belongs to the PyrI family. In terms of assembly, contains catalytic and regulatory chains. Zn(2+) is required as a cofactor.

In terms of biological role, involved in allosteric regulation of aspartate carbamoyltransferase. In Neisseria meningitidis serogroup B (strain ATCC BAA-335 / MC58), this protein is Aspartate carbamoyltransferase regulatory chain.